A 240-amino-acid chain; its full sequence is UPF0502 protein Veis_2102 (240 aa).

It belongs to the UPF0502 family.

This chain is UPF0502 protein Veis_2102, found in Verminephrobacter eiseniae (strain EF01-2).